A 598-amino-acid chain; its full sequence is tRNA(Met) cytidine acetyltransferase TmcA (598 aa).

Residues Gln-141, 163 to 172 (GRGKSTLAGK), and Arg-288 each bind ATP. The region spanning 332–490 (TDLRRLFDAD…HSAMMLYPLS (159 aa)) is the N-acetyltransferase domain. Acetyl-CoA is bound by residues 411 to 413 (IAV), 418 to 424 (QNQGIGS), and Arg-462.

Belongs to the RNA cytidine acetyltransferase family. TmcA subfamily.

It localises to the cytoplasm. It carries out the reaction cytidine(34) in elongator tRNA(Met) + acetyl-CoA + ATP + H2O = N(4)-acetylcytidine(34) in elongator tRNA(Met) + ADP + phosphate + CoA + H(+). In terms of biological role, catalyzes the formation of N(4)-acetylcytidine (ac(4)C) at the wobble position of tRNA(Met), by using acetyl-CoA as an acetyl donor and ATP (or GTP). This chain is tRNA(Met) cytidine acetyltransferase TmcA, found in Haemophilus ducreyi (strain 35000HP / ATCC 700724).